The chain runs to 343 residues: Serine/threonine-protein kinase SRK2C (343 aa).

Positions 4–260 constitute a Protein kinase domain; it reads YEIVKDIGSG…IEEIKNHSWF (257 aa). ATP is bound by residues 10–18 and K33; that span reads IGSGNFGVA. The active-site Proton acceptor is the D123. Residue T158 is modified to Phosphothreonine.

Belongs to the protein kinase superfamily. Ser/Thr protein kinase family. As to quaternary structure, interacts with I-2 and TOPP1. In terms of tissue distribution, expressed in seedlings.

It catalyses the reaction L-seryl-[protein] + ATP = O-phospho-L-seryl-[protein] + ADP + H(+). The catalysed reaction is L-threonyl-[protein] + ATP = O-phospho-L-threonyl-[protein] + ADP + H(+). Its function is as follows. Involved in gene regulation and confers tolerance to drought and osmotic stress. The protein is Serine/threonine-protein kinase SRK2C (SRK2C) of Arabidopsis thaliana (Mouse-ear cress).